A 284-amino-acid chain; its full sequence is WUSCHEL-related homeobox 10 (284 aa).

Positions 1–43 (MDRTATASWEVMSRRGEQQQQLMMQAPASHNGGSGGGEPARSR) are disordered. Positions 39–103 (PARSRWAPKP…NRRSRSRRRA (65 aa)) form a DNA-binding region, homeobox; WUS-type.

The protein belongs to the WUS homeobox family.

The protein localises to the nucleus. Transcription factor which may be involved in developmental processes. The polypeptide is WUSCHEL-related homeobox 10 (WOX10) (Oryza sativa subsp. japonica (Rice)).